The sequence spans 194 residues: Ras-related protein RabU (194 aa).

A GTP-binding site is contributed by 19 to 27 (GYDYECGIK). Positions 42 to 50 (PESQVGVDF) match the Effector region motif. GTP is bound by residues 68-72 (PQNKY) and 130-133 (NNSE).

This sequence belongs to the small GTPase superfamily. Rab family.

In Dictyostelium discoideum (Social amoeba), this protein is Ras-related protein RabU (rabU).